Here is a 404-residue protein sequence, read N- to C-terminus: Probable tRNA sulfurtransferase (404 aa).

Positions 61–166 constitute a THUMP domain; it reads EAVSERLKDV…SGYSYIMCDE (106 aa). ATP-binding positions include 184-185, 209-210, R266, G288, and Q297; these read LL and HF.

It belongs to the ThiI family.

The protein localises to the cytoplasm. The enzyme catalyses [ThiI sulfur-carrier protein]-S-sulfanyl-L-cysteine + a uridine in tRNA + 2 reduced [2Fe-2S]-[ferredoxin] + ATP + H(+) = [ThiI sulfur-carrier protein]-L-cysteine + a 4-thiouridine in tRNA + 2 oxidized [2Fe-2S]-[ferredoxin] + AMP + diphosphate. It carries out the reaction [ThiS sulfur-carrier protein]-C-terminal Gly-Gly-AMP + S-sulfanyl-L-cysteinyl-[cysteine desulfurase] + AH2 = [ThiS sulfur-carrier protein]-C-terminal-Gly-aminoethanethioate + L-cysteinyl-[cysteine desulfurase] + A + AMP + 2 H(+). The protein operates within cofactor biosynthesis; thiamine diphosphate biosynthesis. Catalyzes the ATP-dependent transfer of a sulfur to tRNA to produce 4-thiouridine in position 8 of tRNAs, which functions as a near-UV photosensor. Also catalyzes the transfer of sulfur to the sulfur carrier protein ThiS, forming ThiS-thiocarboxylate. This is a step in the synthesis of thiazole, in the thiamine biosynthesis pathway. The sulfur is donated as persulfide by IscS. This Bacillus cereus (strain ZK / E33L) protein is Probable tRNA sulfurtransferase.